The primary structure comprises 461 residues: Dihydrofolate reductase (461 aa).

Positions 233–447 (DLTMIVAVSS…VEIEFELYGK (215 aa)) constitute a DHFR domain. Residues Ala-239 and 246-252 (GIGKKNS) contribute to the NADP(+) site. Residue 260 to 265 (EMAYFA) coordinates substrate. 292–294 (RSC) is a binding site for NADP(+). Arg-308 provides a ligand contact to substrate. NADP(+)-binding positions include 314–316 (TRN) and 365–372 (GGSFLYGS).

Belongs to the dihydrofolate reductase family.

It carries out the reaction (6S)-5,6,7,8-tetrahydrofolate + NADP(+) = 7,8-dihydrofolate + NADPH + H(+). The protein operates within cofactor biosynthesis; tetrahydrofolate biosynthesis; 5,6,7,8-tetrahydrofolate from 7,8-dihydrofolate: step 1/1. In terms of biological role, key enzyme in folate metabolism. Catalyzes an essential reaction for de novo glycine and purine synthesis, and for DNA precursor synthesis. This Schizosaccharomyces pombe (strain 972 / ATCC 24843) (Fission yeast) protein is Dihydrofolate reductase (dfr1).